Reading from the N-terminus, the 227-residue chain is MKFAVIQFPGSNCDLDMLHAIRDSLGEEAEYVWHAETSLEGFDAVLLPGGFSYGDYLRTGAIAKFSSIMPEVLRFAETGKPVLGVCNGFQILTEIGLLPGALIRNNNLHFICKTVPLRVVNGNTIFTGLYEDNEVIHVPVAHGEGNYYCDDETLLKLKENNQIVFTYDSVNPNGSRADIAGIVNERGNVLGMMPHPERAVEDIIGGTDGLRLFQSIVQAWKEEQVNA.

The Glutamine amidotransferase type-1 domain occupies 2–226 (KFAVIQFPGS…VQAWKEEQVN (225 aa)). The Nucleophile role is filled by C86. Residues H195 and E197 contribute to the active site.

As to quaternary structure, part of the FGAM synthase complex composed of 1 PurL, 1 PurQ and 2 PurS subunits.

It localises to the cytoplasm. It carries out the reaction N(2)-formyl-N(1)-(5-phospho-beta-D-ribosyl)glycinamide + L-glutamine + ATP + H2O = 2-formamido-N(1)-(5-O-phospho-beta-D-ribosyl)acetamidine + L-glutamate + ADP + phosphate + H(+). The catalysed reaction is L-glutamine + H2O = L-glutamate + NH4(+). It functions in the pathway purine metabolism; IMP biosynthesis via de novo pathway; 5-amino-1-(5-phospho-D-ribosyl)imidazole from N(2)-formyl-N(1)-(5-phospho-D-ribosyl)glycinamide: step 1/2. Part of the phosphoribosylformylglycinamidine synthase complex involved in the purines biosynthetic pathway. Catalyzes the ATP-dependent conversion of formylglycinamide ribonucleotide (FGAR) and glutamine to yield formylglycinamidine ribonucleotide (FGAM) and glutamate. The FGAM synthase complex is composed of three subunits. PurQ produces an ammonia molecule by converting glutamine to glutamate. PurL transfers the ammonia molecule to FGAR to form FGAM in an ATP-dependent manner. PurS interacts with PurQ and PurL and is thought to assist in the transfer of the ammonia molecule from PurQ to PurL. In Listeria welshimeri serovar 6b (strain ATCC 35897 / DSM 20650 / CCUG 15529 / CIP 8149 / NCTC 11857 / SLCC 5334 / V8), this protein is Phosphoribosylformylglycinamidine synthase subunit PurQ.